A 501-amino-acid polypeptide reads, in one-letter code: Phytoene desaturase (lycopene-forming) (501 aa).

12 to 45 (IVIGAGFGGLALAIRLQSAGIATTLVEARDKPGG) provides a ligand contact to FAD.

It belongs to the carotenoid/retinoid oxidoreductase family. FAD serves as cofactor.

It catalyses the reaction 15-cis-phytoene + 4 A = all-trans-lycopene + 4 AH2. It functions in the pathway carotenoid biosynthesis; astaxanthin biosynthesis. This enzyme converts phytoene into lycopene via the intermediaries of phytofluene, zeta-carotene and neurosporene by the introduction of four double bonds. The protein is Phytoene desaturase (lycopene-forming) (crtI) of Paracoccus sp. (strain N81106 / MBIC 01143) (Agrobacterium aurantiacum).